A 258-amino-acid polypeptide reads, in one-letter code: Phosphate import ATP-binding protein PstB (258 aa).

The region spanning 5–247 is the ABC transporter domain; that stretch reads LDLKGVNIYY…EKIFSNPSQK (243 aa). 37 to 44 is a binding site for ATP; the sequence is GPSGCGKT.

Belongs to the ABC transporter superfamily. Phosphate importer (TC 3.A.1.7) family. As to quaternary structure, the complex is composed of two ATP-binding proteins (PstB), two transmembrane proteins (PstC and PstA) and a solute-binding protein (PstS).

It localises to the cell membrane. It carries out the reaction phosphate(out) + ATP + H2O = ADP + 2 phosphate(in) + H(+). Part of the ABC transporter complex PstSACB involved in phosphate import. Responsible for energy coupling to the transport system. This is Phosphate import ATP-binding protein PstB from Mycolicibacterium paratuberculosis (strain ATCC BAA-968 / K-10) (Mycobacterium paratuberculosis).